The sequence spans 69 residues: DNA gyrase inhibitor YacG (69 aa).

Zn(2+) contacts are provided by cysteine 7, cysteine 10, cysteine 26, and cysteine 30.

This sequence belongs to the DNA gyrase inhibitor YacG family. As to quaternary structure, interacts with GyrB. Zn(2+) is required as a cofactor.

Functionally, inhibits all the catalytic activities of DNA gyrase by preventing its interaction with DNA. Acts by binding directly to the C-terminal domain of GyrB, which probably disrupts DNA binding by the gyrase. This Shewanella putrefaciens (strain CN-32 / ATCC BAA-453) protein is DNA gyrase inhibitor YacG.